Reading from the N-terminus, the 151-residue chain is HTH-type transcriptional regulator TcaR (151 aa).

Residues 1-142 enclose the HTH marR-type domain; that stretch reads MVKHLQDHIQ…VRQVLEVINH (142 aa). A DNA-binding region (H-T-H motif) is located at residues 54 to 77; that stretch reads ISEITQRQGVNKAAVSRRIKKLID.

Its function is as follows. Involved in the antibiotic teicoplanin susceptibility. Inactivation of the tcaRAB operon leads to teicoplanin resistance. Functionally, is a weak negative regulator of transcription of the icaABD operon. The sequence is that of HTH-type transcriptional regulator TcaR (tcaR) from Staphylococcus aureus (strain COL).